We begin with the raw amino-acid sequence, 667 residues long: Threonine--tRNA ligase (667 aa).

One can recognise a TGS domain in the interval 3–64 (DMIRVTLPDG…EEDTNLALVT (62 aa)). Residues 252–561 (DHRRLGQEMD…LIEHFVGRFP (310 aa)) are catalytic. The Zn(2+) site is built by cysteine 357, histidine 408, and histidine 538.

This sequence belongs to the class-II aminoacyl-tRNA synthetase family. Homodimer. The cofactor is Zn(2+).

The protein resides in the cytoplasm. It carries out the reaction tRNA(Thr) + L-threonine + ATP = L-threonyl-tRNA(Thr) + AMP + diphosphate + H(+). Its function is as follows. Catalyzes the attachment of threonine to tRNA(Thr) in a two-step reaction: L-threonine is first activated by ATP to form Thr-AMP and then transferred to the acceptor end of tRNA(Thr). Also edits incorrectly charged L-seryl-tRNA(Thr). In Sphingopyxis alaskensis (strain DSM 13593 / LMG 18877 / RB2256) (Sphingomonas alaskensis), this protein is Threonine--tRNA ligase.